The sequence spans 271 residues: MKI67 FHA domain-interacting nucleolar phosphoprotein (271 aa).

The tract at residues 1-20 (MAEYSGPAKPTLALNPREDS) is disordered. A2 carries the N-acetylalanine modification. K37 is covalently cross-linked (Glycyl lysine isopeptide (Lys-Gly) (interchain with G-Cter in SUMO2)). The region spanning 44–122 (GVVYLGHLPS…RLLSCKFMPR (79 aa)) is the RRM domain. Residue R113 is modified to Omega-N-methylarginine. Glycyl lysine isopeptide (Lys-Gly) (interchain with G-Cter in SUMO2) cross-links involve residues K178 and K191. Residues T213 and T217 each carry the phosphothreonine modification. R223 and R224 each carry omega-N-methylated arginine. S226 bears the Phosphoserine mark. The interval 242-271 (PVSPVKEDTQKTPAPESSGKKRLRKRKSKQ) is disordered. K247 participates in a covalent cross-link: Glycyl lysine isopeptide (Lys-Gly) (interchain with G-Cter in SUMO1); alternate. K247 participates in a covalent cross-link: Glycyl lysine isopeptide (Lys-Gly) (interchain with G-Cter in SUMO2); alternate. Positions 261-271 (KKRLRKRKSKQ) are enriched in basic residues.

In terms of assembly, binds to the FHA domain of MKI67; this interaction is enhanced in mitosis. Phosphorylated.

Its subcellular location is the nucleus. The protein resides in the nucleolus. It is found in the chromosome. The protein is MKI67 FHA domain-interacting nucleolar phosphoprotein (Nifk) of Rattus norvegicus (Rat).